We begin with the raw amino-acid sequence, 66 residues long: Alpha-conotoxin-like Tx2 (66 aa).

The signal sequence occupies residues 1–21; it reads MGMRMMFTVFLLVVLATTVVS. Positions 22 to 49 are excised as a propeptide; it reads FTSGRRTFHGRNAAAKASGLVSLTDRRP. Intrachain disulfides connect Cys-51-Cys-57 and Cys-52-Cys-65. The ser-Xaa-Pro motif, crucial for potent interaction with nAChR stretch occupies residues 53 to 55; that stretch reads SHP.

It belongs to the conotoxin A superfamily. Expressed by the venom duct.

The protein localises to the secreted. Functionally, alpha-conotoxins act on postsynaptic membranes, they bind to the nicotinic acetylcholine receptors (nAChR) and thus inhibit them. In Conus textile (Cloth-of-gold cone), this protein is Alpha-conotoxin-like Tx2.